The sequence spans 711 residues: Transferrin-binding protein B (711 aa).

Residues 1–20 form the signal peptide; the sequence is MNNPLVNQAAMVLPVFLLSA. Residue cysteine 21 is the site of N-palmitoyl cysteine attachment. Cysteine 21 carries S-diacylglycerol cysteine lipidation. 7 disordered regions span residues 33 to 58, 79 to 105, 118 to 146, 225 to 251, 370 to 396, 437 to 492, and 682 to 711; these read VDTE…QKDQ, SEVK…KRQK, DIYS…KNQA, SKKQ…ESTL, LENG…SENS, PKDS…GDTN, and TEKA…QPVQ. Over residues 46–56 the composition is skewed to polar residues; it reads DVSSEKPQAQK. The segment covering 96 to 105 has biased composition (basic and acidic residues); that stretch reads KPKELPKRQK. The segment covering 119-146 has biased composition (polar residues); it reads IYSSPYLTPSNHQNGSAGNGVNQPKNQA. Low complexity predominate over residues 373–393; it reads GAAASGSTGAAASGGAAGTSS. Residues 457–472 are compositionally biased toward basic and acidic residues; it reads FTRKFEHTPESDKKDA. 2 stretches are compositionally biased toward polar residues: residues 474-492 and 684-699; these read AGTQ…GDTN and KATA…SSAT.

Belongs to the TbpB family. Isotype II subfamily. As to quaternary structure, binds only human holo-transferrin (TF), via the TF C-terminus. Forms a large complex with TbpA and TF. Interacts via its C-terminal domain with Slam1.

The protein resides in the cell outer membrane. Its subcellular location is the cell surface. In terms of biological role, neisseria acquires iron by extracting it from serum transferrin (TF) in its human host. Acts as a TF receptor and is required for TF utilization. Involved in the initial capture of TF. Helps select only those TF molecules that can be used as an iron source and concentrates them on the cell surface, maintaining the iron-loaded status of the TF C-terminal lobe until its delivery to TbpA. The polypeptide is Transferrin-binding protein B (tbpB) (Neisseria meningitidis serogroup B).